The following is a 314-amino-acid chain: uncharacterized protein (314 aa).

The disordered stretch occupies residues methionine 1–threonine 70. Positions glutamine 43–lysine 65 are enriched in basic residues. Positions 265, 285, and 294 each coordinate S-adenosyl-L-methionine.

Belongs to the class IV-like SAM-binding methyltransferase superfamily. RNA methyltransferase TrmH family.

This is an uncharacterized protein from Mycolicibacterium vanbaalenii (strain DSM 7251 / JCM 13017 / BCRC 16820 / KCTC 9966 / NRRL B-24157 / PYR-1) (Mycobacterium vanbaalenii).